A 185-amino-acid polypeptide reads, in one-letter code: Ribosome-recycling factor (185 aa).

This sequence belongs to the RRF family.

It localises to the cytoplasm. Responsible for the release of ribosomes from messenger RNA at the termination of protein biosynthesis. May increase the efficiency of translation by recycling ribosomes from one round of translation to another. The polypeptide is Ribosome-recycling factor (Shewanella baltica (strain OS185)).